The primary structure comprises 327 residues: Succinylglutamate desuccinylase (327 aa).

Positions 53, 56, and 146 each coordinate Zn(2+). Residue E209 is part of the active site.

The protein belongs to the AspA/AstE family. Succinylglutamate desuccinylase subfamily. Requires Zn(2+) as cofactor.

The catalysed reaction is N-succinyl-L-glutamate + H2O = L-glutamate + succinate. It participates in amino-acid degradation; L-arginine degradation via AST pathway; L-glutamate and succinate from L-arginine: step 5/5. Functionally, transforms N(2)-succinylglutamate into succinate and glutamate. In Serratia proteamaculans (strain 568), this protein is Succinylglutamate desuccinylase.